A 196-amino-acid polypeptide reads, in one-letter code: Homeobox protein ANF-1 (196 aa).

The homeobox DNA-binding region spans G119 to H178.

It belongs to the ANF homeobox family.

The protein localises to the nucleus. Its function is as follows. May be involved in the early patterning of the most anterior region of the main embryonic body axis. This is Homeobox protein ANF-1 from Gallus gallus (Chicken).